The chain runs to 379 residues: Chaperone protein DnaJ (379 aa).

Residues 5-69 form the J domain; it reads DYYEVLGISK…NKRASYDQFG (65 aa). A CR-type zinc finger spans residues 136 to 218; the sequence is GTTKEISIRK…CHGKGTENKT (83 aa). Zn(2+)-binding residues include Cys149, Cys152, Cys166, Cys169, Cys192, Cys195, Cys206, and Cys209. CXXCXGXG motif repeat units follow at residues 149–156, 166–173, 192–199, and 206–213; these read CETCHGDG, CSYCNGAG, CPKCNGSG, and CPTCHGKG.

Belongs to the DnaJ family. As to quaternary structure, homodimer. It depends on Zn(2+) as a cofactor.

Its subcellular location is the cytoplasm. In terms of biological role, participates actively in the response to hyperosmotic and heat shock by preventing the aggregation of stress-denatured proteins and by disaggregating proteins, also in an autonomous, DnaK-independent fashion. Unfolded proteins bind initially to DnaJ; upon interaction with the DnaJ-bound protein, DnaK hydrolyzes its bound ATP, resulting in the formation of a stable complex. GrpE releases ADP from DnaK; ATP binding to DnaK triggers the release of the substrate protein, thus completing the reaction cycle. Several rounds of ATP-dependent interactions between DnaJ, DnaK and GrpE are required for fully efficient folding. Also involved, together with DnaK and GrpE, in the DNA replication of plasmids through activation of initiation proteins. This is Chaperone protein DnaJ from Staphylococcus aureus (strain bovine RF122 / ET3-1).